The primary structure comprises 240 residues: Chloroplastic group IIB intron splicing facilitator CRS2-B, chloroplastic (240 aa).

This sequence belongs to the PTH family. CRS2 subfamily. Part of large ribonucleo-protein complexes that include group IIB introns and either CAF1 or CAF2.

The protein resides in the plastid. Its subcellular location is the chloroplast stroma. Its function is as follows. Required for the splicing of group IIB introns in chloroplasts. This is Chloroplastic group IIB intron splicing facilitator CRS2-B, chloroplastic (CRS2B) from Arabidopsis thaliana (Mouse-ear cress).